The chain runs to 744 residues: CCR4-NOT transcription complex subunit 10 (744 aa).

Over residues 1–16 (MAADKPADQGAEKHEG) the composition is skewed to basic and acidic residues. The interval 1–25 (MAADKPADQGAEKHEGTGQSSGITD) is disordered. Position 2 is an N-acetylalanine (alanine 2). Positions 74-107 (KSNQTTTDNLRQTLNQLKNQVHSAVEEMDGLDDV) form a coiled coil. A compositionally biased stretch (low complexity) spans 183–199 (NNNKNGKNETGNNNNKD). Disordered regions lie at residues 183–204 (NNNK…SNHK), 477–521 (QDPK…PPSS), and 602–634 (VSLG…PQCY). Positions 484 to 495 (GAKNSNQLGGNT) are enriched in polar residues. Residues 496 to 506 (ESSESSETCSS) show a composition bias toward low complexity. The segment covering 602-612 (VSLGISSNEQD) has biased composition (polar residues).

The protein belongs to the CNOT10 family. Component of the CCR4-NOT complex; distinct complexes seem to exist that differ in the participation of probably mutually exclusive catalytic subunits. CNOT10 and CNOT11 form a subcomplex docked to the CNOT1 scaffold.

The protein localises to the cytoplasm. Its subcellular location is the nucleus. Component of the CCR4-NOT complex which is one of the major cellular mRNA deadenylases and is linked to various cellular processes including bulk mRNA degradation, miRNA-mediated repression, translational repression during translational initiation and general transcription regulation. Additional complex functions may be a consequence of its influence on mRNA expression. Is not required for association of CNOT7 to the CCR4-NOT complex. This Macaca fascicularis (Crab-eating macaque) protein is CCR4-NOT transcription complex subunit 10 (CNOT10).